The sequence spans 174 residues: Male-enhanced antigen 1 (174 aa).

Disordered stretches follow at residues Met-1–Asp-77 and Leu-94–Asp-123. 3 stretches are compositionally biased toward acidic residues: residues Ser-38–Glu-48, Pro-65–Asp-77, and Leu-101–Gly-110. Ser-103 is subject to Phosphoserine.

Its function is as follows. May play an important role in spermatogenesis and/or testis development. This chain is Male-enhanced antigen 1 (MEA1), found in Sus scrofa (Pig).